The following is a 388-amino-acid chain: Diacylglycerol O-acyltransferase 2 (388 aa).

Over 1 to 69 (MKTLIAAYSG…NRSKVEKQLQ (69 aa)) the chain is Cytoplasmic. A helical membrane pass occupies residues 70-88 (VISVLQWVLSFLVLGVACS). Over 89 to 92 (VILM) the chain is Lumenal. Residues 93–112 (YTFCTDCWLIAVLYFTWLAF) form a helical membrane-spanning segment. The Cytoplasmic portion of the chain corresponds to 113-388 (DWNTPKKGGR…LPETEVLEVN (276 aa)).

Belongs to the diacylglycerol acyltransferase family. In terms of assembly, forms multimeric complexes consisting of several DGAT2 subunits. Interacts with SLC27A1 and this interaction is enhanced in the presence of ZFYVE1. In terms of tissue distribution, predominantly expressed in liver. Also expressed in testis.

Its subcellular location is the endoplasmic reticulum membrane. It localises to the lipid droplet. The protein localises to the cytoplasm. The protein resides in the perinuclear region. The catalysed reaction is an acyl-CoA + a 1,2-diacyl-sn-glycerol = a triacyl-sn-glycerol + CoA. The enzyme catalyses all-trans-retinol + an acyl-CoA = an all-trans-retinyl ester + CoA. It catalyses the reaction 1,2-di-(9Z-octadecenoyl)-sn-glycerol + hexadecanoyl-CoA = 1,2-di-(9Z)-octadecenoyl-3-hexadecanoyl-sn-glycerol + CoA. It carries out the reaction 1,2-di-(9Z-octadecenoyl)-sn-glycerol + (9Z)-octadecenoyl-CoA = 1,2,3-tri-(9Z-octadecenoyl)-glycerol + CoA. The catalysed reaction is 1,3-di-(9Z-octadecenoyl)-glycerol + (9Z)-octadecenoyl-CoA = 1,2,3-tri-(9Z-octadecenoyl)-glycerol + CoA. The enzyme catalyses 2,3-di-(9Z)-octadecenoyl-sn-glycerol + (9Z)-octadecenoyl-CoA = 1,2,3-tri-(9Z-octadecenoyl)-glycerol + CoA. It catalyses the reaction 2-(9Z-octadecenoyl)-glycerol + hexadecanoyl-CoA = 1-hexadecanoyl-2-(9Z-octadecenoyl)-sn-glycerol + CoA. It carries out the reaction 2-(9Z-octadecenoyl)-glycerol + (9Z)-octadecenoyl-CoA = 1,2-di-(9Z-octadecenoyl)-sn-glycerol + CoA. The catalysed reaction is all-trans-retinol + hexadecanoyl-CoA = all-trans-retinyl hexadecanoate + CoA. The enzyme catalyses 1-O-(9Z-octadecenyl)-glycerol + (9Z)-octadecenoyl-CoA = 1-O-(9Z-octadecyl)-3-(9Z-octadecenoyl)-glycerol + CoA. It catalyses the reaction 1-(9Z-octadecenoyl)-glycerol + (9Z)-octadecenoyl-CoA = 1,2-di-(9Z-octadecenoyl)-glycerol + CoA. It participates in glycerolipid metabolism; triacylglycerol biosynthesis. With respect to regulation, inhibited by niacin. In terms of biological role, essential acyltransferase that catalyzes the terminal and only committed step in triacylglycerol synthesis by using diacylglycerol and fatty acyl CoA as substrates. Required for synthesis and storage of intracellular triglycerides. Probably plays a central role in cytosolic lipid accumulation. In liver, is primarily responsible for incorporating endogenously synthesized fatty acids into triglycerides. Also functions as an acyl-CoA retinol acyltransferase (ARAT). Also able to use 1-monoalkylglycerol (1-MAkG) as an acyl acceptor for the synthesis of monoalkyl-monoacylglycerol (MAMAG). This chain is Diacylglycerol O-acyltransferase 2, found in Mus musculus (Mouse).